A 195-amino-acid chain; its full sequence is Probable GTP-binding protein EngB (195 aa).

One can recognise an EngB-type G domain in the interval 22–195 (QLPEIALAGR…WSALSRYIKR (174 aa)). GTP contacts are provided by residues 30 to 37 (GRSNVGKS), 57 to 61 (GKTQT), 75 to 78 (DVPG), 142 to 145 (TKLD), and 174 to 176 (FSA). Ser-37 and Thr-59 together coordinate Mg(2+).

This sequence belongs to the TRAFAC class TrmE-Era-EngA-EngB-Septin-like GTPase superfamily. EngB GTPase family. The cofactor is Mg(2+).

Necessary for normal cell division and for the maintenance of normal septation. This Oceanobacillus iheyensis (strain DSM 14371 / CIP 107618 / JCM 11309 / KCTC 3954 / HTE831) protein is Probable GTP-binding protein EngB.